Here is a 196-residue protein sequence, read N- to C-terminus: MGRRKIEIKRIENKSSRQVTFSKRRNGLIDKARQLSILCESSVAVVVVSASGKLYDSSSGDDISKIIDRYEIQHADELRALDLEEKIQNYLPHKELLETVQSKLEEPNVDNVSVDSLISLEEQLETALSVSRARKAELMMEYIESLKEKEKLLREENQVLASQMGKNTLLATDDERGMFPGSSSGNKIPETLPLLN.

An MADS-box domain is found at 1–61 (MGRRKIEIKR…GKLYDSSSGD (61 aa)). Positions 80-170 (ALDLEEKIQN…ASQMGKNTLL (91 aa)) constitute a K-box domain. The segment at 175-196 (ERGMFPGSSSGNKIPETLPLLN) is disordered.

As to quaternary structure, interacts with AGL39, AGL97 and AGL74. Expressed in most plant tissues, embryo, seedlings, roots, leaves, stems, inflorescence, pollen, siliques and flowers.

The protein resides in the nucleus. Probable transcription factor involved in the negative regulation of flowering time in both long and short days, probably through the photoperiodic and vernalization pathways. Prevents premature flowering. The protein is Agamous-like MADS-box protein AGL27 (AGL27) of Arabidopsis thaliana (Mouse-ear cress).